The primary structure comprises 635 residues: Chaperone protein DnaK (635 aa).

Position 200 is a phosphothreonine; by autocatalysis (threonine 200). The interval 595–635 is disordered; it reads KAQPLTEKVQAKSSAENTSKEKSKADDDVVDADFEEVKDDK. Basic and acidic residues predominate over residues 612–621; the sequence is TSKEKSKADD. Residues 622–635 show a composition bias toward acidic residues; sequence DVVDADFEEVKDDK.

The protein belongs to the heat shock protein 70 family.

Acts as a chaperone. This Ruthia magnifica subsp. Calyptogena magnifica protein is Chaperone protein DnaK.